The sequence spans 261 residues: Cytochrome c oxidase subunit 3 (261 aa).

The Mitochondrial matrix segment spans residues 1-15 (MTHQTHAYHMVNPSP). A helical membrane pass occupies residues 16–34 (WPLTGALSALLMTSGLIMW). Residues 35 to 40 (FHYNSM) lie on the Mitochondrial intermembrane side of the membrane. Residues 41 to 66 (ALLTLGFTTNLLTMYQWWRDVIREGT) form a helical membrane-spanning segment. At 67–72 (FQGHHT) the chain is on the mitochondrial matrix side. Residues 73–105 (PIVQKGLRYGMVLFIVSEVFFFAGFFWAFYHSS) traverse the membrane as a helical segment. The Mitochondrial intermembrane portion of the chain corresponds to 106-128 (LAPTPELGGCWPPTGIIPLNPLE). Residues 129-152 (VPLLNTSVLLASGVSITWAHHSLM) traverse the membrane as a helical segment. Residues 153–155 (EGN) are Mitochondrial matrix-facing. A helical transmembrane segment spans residues 156 to 183 (RKHMLQALFITISLGVYFTLLQASEYYE). Topologically, residues 184–190 (TSFTISD) are mitochondrial intermembrane. A helical transmembrane segment spans residues 191–223 (GVYGSTFFMATGFHGLHVIIGSTFLIVCFLRQL). The Mitochondrial matrix portion of the chain corresponds to 224–232 (YYHFTSNHH). A helical membrane pass occupies residues 233-256 (FGFEAAAWYWHFVDVVWLFLYVSI). The Mitochondrial intermembrane portion of the chain corresponds to 257–261 (YWWGS).

Belongs to the cytochrome c oxidase subunit 3 family. In terms of assembly, component of the cytochrome c oxidase (complex IV, CIV), a multisubunit enzyme composed of 14 subunits. The complex is composed of a catalytic core of 3 subunits MT-CO1, MT-CO2 and MT-CO3, encoded in the mitochondrial DNA, and 11 supernumerary subunits COX4I, COX5A, COX5B, COX6A, COX6B, COX6C, COX7A, COX7B, COX7C, COX8 and NDUFA4, which are encoded in the nuclear genome. The complex exists as a monomer or a dimer and forms supercomplexes (SCs) in the inner mitochondrial membrane with NADH-ubiquinone oxidoreductase (complex I, CI) and ubiquinol-cytochrome c oxidoreductase (cytochrome b-c1 complex, complex III, CIII), resulting in different assemblies (supercomplex SCI(1)III(2)IV(1) and megacomplex MCI(2)III(2)IV(2)).

Its subcellular location is the mitochondrion inner membrane. The catalysed reaction is 4 Fe(II)-[cytochrome c] + O2 + 8 H(+)(in) = 4 Fe(III)-[cytochrome c] + 2 H2O + 4 H(+)(out). In terms of biological role, component of the cytochrome c oxidase, the last enzyme in the mitochondrial electron transport chain which drives oxidative phosphorylation. The respiratory chain contains 3 multisubunit complexes succinate dehydrogenase (complex II, CII), ubiquinol-cytochrome c oxidoreductase (cytochrome b-c1 complex, complex III, CIII) and cytochrome c oxidase (complex IV, CIV), that cooperate to transfer electrons derived from NADH and succinate to molecular oxygen, creating an electrochemical gradient over the inner membrane that drives transmembrane transport and the ATP synthase. Cytochrome c oxidase is the component of the respiratory chain that catalyzes the reduction of oxygen to water. Electrons originating from reduced cytochrome c in the intermembrane space (IMS) are transferred via the dinuclear copper A center (CU(A)) of subunit 2 and heme A of subunit 1 to the active site in subunit 1, a binuclear center (BNC) formed by heme A3 and copper B (CU(B)). The BNC reduces molecular oxygen to 2 water molecules using 4 electrons from cytochrome c in the IMS and 4 protons from the mitochondrial matrix. In Canis lupus familiaris (Dog), this protein is Cytochrome c oxidase subunit 3 (MT-CO3).